Reading from the N-terminus, the 596-residue chain is Phosphoenolpyruvate carboxykinase [GTP] (596 aa).

Substrate is bound by residues arginine 77 and 205 to 207 (YGG). 2 residues coordinate Mn(2+): lysine 214 and histidine 234. Residue serine 256 participates in substrate binding. 257–262 (ACGKTN) is a GTP binding site. The active site involves cysteine 258. Residue aspartate 283 coordinates Mn(2+). Residues 362–388 (KKGSTEKAAHPNSRFTAPAKNNPAISP) are disordered. Residue 373 to 375 (NSR) coordinates substrate. GTP-binding positions include arginine 375, arginine 406, and 499 to 502 (YGDN).

It belongs to the phosphoenolpyruvate carboxykinase [GTP] family. As to quaternary structure, monomer. The cofactor is Mn(2+).

It localises to the cytoplasm. The enzyme catalyses oxaloacetate + GTP = phosphoenolpyruvate + GDP + CO2. It participates in carbohydrate biosynthesis; gluconeogenesis. Its function is as follows. Catalyzes the conversion of oxaloacetate (OAA) to phosphoenolpyruvate (PEP), the rate-limiting step in the metabolic pathway that produces glucose from lactate and other precursors derived from the citric acid cycle. The chain is Phosphoenolpyruvate carboxykinase [GTP] from Anaeromyxobacter dehalogenans (strain 2CP-C).